The chain runs to 185 residues: Peptidyl-tRNA hydrolase (185 aa).

Tyr-14 is a binding site for tRNA. The Proton acceptor role is filled by His-19. Tyr-64, Asn-66, and Asn-112 together coordinate tRNA.

It belongs to the PTH family. As to quaternary structure, monomer.

It is found in the cytoplasm. It catalyses the reaction an N-acyl-L-alpha-aminoacyl-tRNA + H2O = an N-acyl-L-amino acid + a tRNA + H(+). Hydrolyzes ribosome-free peptidyl-tRNAs (with 1 or more amino acids incorporated), which drop off the ribosome during protein synthesis, or as a result of ribosome stalling. In terms of biological role, catalyzes the release of premature peptidyl moieties from peptidyl-tRNA molecules trapped in stalled 50S ribosomal subunits, and thus maintains levels of free tRNAs and 50S ribosomes. The polypeptide is Peptidyl-tRNA hydrolase (Ligilactobacillus salivarius (strain UCC118) (Lactobacillus salivarius)).